Here is a 166-residue protein sequence, read N- to C-terminus: NAD(P)H-quinone oxidoreductase subunit I, chloroplastic (166 aa).

4Fe-4S ferredoxin-type domains follow at residues 55 to 84 (GRIH…VDWK) and 95 to 124 (LNYS…MTEE). [4Fe-4S] cluster contacts are provided by C64, C67, C70, C74, C104, C107, C110, and C114.

It belongs to the complex I 23 kDa subunit family. As to quaternary structure, NDH is composed of at least 16 different subunits, 5 of which are encoded in the nucleus. It depends on [4Fe-4S] cluster as a cofactor.

The protein resides in the plastid. The protein localises to the chloroplast thylakoid membrane. The catalysed reaction is a plastoquinone + NADH + (n+1) H(+)(in) = a plastoquinol + NAD(+) + n H(+)(out). The enzyme catalyses a plastoquinone + NADPH + (n+1) H(+)(in) = a plastoquinol + NADP(+) + n H(+)(out). In terms of biological role, NDH shuttles electrons from NAD(P)H:plastoquinone, via FMN and iron-sulfur (Fe-S) centers, to quinones in the photosynthetic chain and possibly in a chloroplast respiratory chain. The immediate electron acceptor for the enzyme in this species is believed to be plastoquinone. Couples the redox reaction to proton translocation, and thus conserves the redox energy in a proton gradient. In Sigesbeckia blakei, this protein is NAD(P)H-quinone oxidoreductase subunit I, chloroplastic.